The sequence spans 217 residues: UPF0319 protein VS_II0881 (217 aa).

The N-terminal stretch at 1-21 (MKTIQSIALLSAIVAAPSVLA) is a signal peptide.

This sequence belongs to the UPF0319 family.

The protein is UPF0319 protein VS_II0881 of Vibrio atlanticus (strain LGP32) (Vibrio splendidus (strain Mel32)).